Reading from the N-terminus, the 427-residue chain is 5-hydroxybenzimidazole synthase BzaA (427 aa).

Belongs to the ThiC family. 5-hydroxybenzimidazole synthase subfamily. The cofactor is [4Fe-4S] cluster.

It carries out the reaction 5-amino-1-(5-phospho-beta-D-ribosyl)imidazole + AH2 + S-adenosyl-L-methionine = 5-hydroxybenzimidazole + 5'-deoxyadenosine + formate + L-methionine + A + NH4(+) + phosphate + 2 H(+). Its pathway is cofactor biosynthesis; adenosylcobalamin biosynthesis. In terms of biological role, together with BzaB, catalyzes the conversion of aminoimidazole ribotide (AIR) to 5-hydroxybenzimidazole (5-HBI) in a radical S-adenosyl-L-methionine (SAM)-dependent reaction. Is thus involved in the anaerobic biosynthesis of dimethylbenzimidazole (DMB), the lower axial ligand of vitamin B12 (cobalamin). Requires BzaB for catalytic activity, as BzaA alone displays no activity. The protein is 5-hydroxybenzimidazole synthase BzaA of Eubacterium limosum.